Here is an 80-residue protein sequence, read N- to C-terminus: Acyl carrier protein (80 aa).

The Carrier domain maps to 4-79 (EEIFNKIKDL…DAVSYIKSHQ (76 aa)). Serine 39 carries the post-translational modification O-(pantetheine 4'-phosphoryl)serine.

The protein belongs to the acyl carrier protein (ACP) family. 4'-phosphopantetheine is transferred from CoA to a specific serine of apo-ACP by AcpS. This modification is essential for activity because fatty acids are bound in thioester linkage to the sulfhydryl of the prosthetic group.

It localises to the cytoplasm. The protein operates within lipid metabolism; fatty acid biosynthesis. Carrier of the growing fatty acid chain in fatty acid biosynthesis. This is Acyl carrier protein from Lactobacillus acidophilus (strain ATCC 700396 / NCK56 / N2 / NCFM).